The chain runs to 227 residues: 7-cyano-7-deazaguanine synthase (227 aa).

8–18 is an ATP binding site; sequence VSGGADSATVL. 4 residues coordinate Zn(2+): C192, C202, C205, and C208.

It belongs to the QueC family. Zn(2+) is required as a cofactor.

The catalysed reaction is 7-carboxy-7-deazaguanine + NH4(+) + ATP = 7-cyano-7-deazaguanine + ADP + phosphate + H2O + H(+). Its pathway is purine metabolism; 7-cyano-7-deazaguanine biosynthesis. In terms of biological role, catalyzes the ATP-dependent conversion of 7-carboxy-7-deazaguanine (CDG) to 7-cyano-7-deazaguanine (preQ(0)). The polypeptide is 7-cyano-7-deazaguanine synthase (Rickettsia akari (strain Hartford)).